Consider the following 190-residue polypeptide: Peptidyl-prolyl cis-trans isomerase A (190 aa).

Positions 1 to 23 are cleaved as a signal peptide; sequence MSKRILAAVVTVLSLTAFSPAFA. Residues 26–187 form the PPIase cyclophilin-type domain; sequence TSTHVLLTTS…KPIVIQSAKI (162 aa).

The protein belongs to the cyclophilin-type PPIase family.

Its subcellular location is the periplasm. It catalyses the reaction [protein]-peptidylproline (omega=180) = [protein]-peptidylproline (omega=0). In terms of biological role, PPIases accelerate the folding of proteins. It catalyzes the cis-trans isomerization of proline imidic peptide bonds in oligopeptides. The protein is Peptidyl-prolyl cis-trans isomerase A (rotA) of Dickeya dadantii (strain 3937) (Erwinia chrysanthemi (strain 3937)).